Reading from the N-terminus, the 418-residue chain is Glutamyl-tRNA reductase (418 aa).

Residues 49–52 (TCNR), serine 109, 114–116 (EPQ), and glutamine 120 each bind substrate. The Nucleophile role is filled by cysteine 50. 189–194 (GAGETI) lines the NADP(+) pocket.

The protein belongs to the glutamyl-tRNA reductase family. Homodimer.

It catalyses the reaction (S)-4-amino-5-oxopentanoate + tRNA(Glu) + NADP(+) = L-glutamyl-tRNA(Glu) + NADPH + H(+). It participates in porphyrin-containing compound metabolism; protoporphyrin-IX biosynthesis; 5-aminolevulinate from L-glutamyl-tRNA(Glu): step 1/2. Functionally, catalyzes the NADPH-dependent reduction of glutamyl-tRNA(Glu) to glutamate 1-semialdehyde (GSA). The polypeptide is Glutamyl-tRNA reductase (Shigella flexneri).